The chain runs to 101 residues: Small ribosomal subunit protein uS10 (101 aa).

Belongs to the universal ribosomal protein uS10 family. As to quaternary structure, part of the 30S ribosomal subunit.

Its function is as follows. Involved in the binding of tRNA to the ribosomes. This is Small ribosomal subunit protein uS10 from Corynebacterium aurimucosum (strain ATCC 700975 / DSM 44827 / CIP 107346 / CN-1) (Corynebacterium nigricans).